We begin with the raw amino-acid sequence, 215 residues long: LysM and putative peptidoglycan-binding domain-containing protein 2 (215 aa).

The disordered stretch occupies residues 1-40 (MADSSPALSLREGGPRAPRPSAPSPPPRSRSGSESEEAEL). Residue Ala-2 is modified to N-acetylalanine. 4 positions are modified to phosphoserine: Ser-5, Ser-24, Ser-33, and Ser-57. The segment covering 17 to 28 (APRPSAPSPPPR) has biased composition (pro residues). The LysM domain maps to 71–115 (VEHRVRAGDTLQGIALKYGVTMEQIKRANKLFTNDCIFLKKTLNI). Disordered regions lie at residues 132–175 (DSPE…EEVS) and 193–215 (AAKK…LYHS). A compositionally biased stretch (basic and acidic residues) spans 196–205 (KLKEESRDEE).

This Homo sapiens (Human) protein is LysM and putative peptidoglycan-binding domain-containing protein 2 (LYSMD2).